A 208-amino-acid chain; its full sequence is Small ribosomal subunit protein uS4 (208 aa).

One can recognise an S4 RNA-binding domain in the interval 98–158 (RRLDNVVYRL…EKSRKIACIN (61 aa)).

This sequence belongs to the universal ribosomal protein uS4 family. In terms of assembly, part of the 30S ribosomal subunit. Contacts protein S5. The interaction surface between S4 and S5 is involved in control of translational fidelity.

In terms of biological role, one of the primary rRNA binding proteins, it binds directly to 16S rRNA where it nucleates assembly of the body of the 30S subunit. Functionally, with S5 and S12 plays an important role in translational accuracy. The protein is Small ribosomal subunit protein uS4 of Geobacter metallireducens (strain ATCC 53774 / DSM 7210 / GS-15).